Consider the following 119-residue polypeptide: Large ribosomal subunit protein uL22 (119 aa).

The protein belongs to the universal ribosomal protein uL22 family. Part of the 50S ribosomal subunit.

Its function is as follows. This protein binds specifically to 23S rRNA; its binding is stimulated by other ribosomal proteins, e.g. L4, L17, and L20. It is important during the early stages of 50S assembly. It makes multiple contacts with different domains of the 23S rRNA in the assembled 50S subunit and ribosome. In terms of biological role, the globular domain of the protein is located near the polypeptide exit tunnel on the outside of the subunit, while an extended beta-hairpin is found that lines the wall of the exit tunnel in the center of the 70S ribosome. This chain is Large ribosomal subunit protein uL22, found in Trichodesmium erythraeum (strain IMS101).